Here is a 336-residue protein sequence, read N- to C-terminus: UDP-N-acetylglucosamine--N-acetylmuramyl-(pentapeptide) pyrophosphoryl-undecaprenol N-acetylglucosamine transferase (336 aa).

4 residues coordinate UDP-N-acetyl-alpha-D-glucosamine: Asn-102, Arg-144, Ser-172, and Gln-264.

It belongs to the glycosyltransferase 28 family. MurG subfamily.

It localises to the cell membrane. The enzyme catalyses di-trans,octa-cis-undecaprenyl diphospho-N-acetyl-alpha-D-muramoyl-L-alanyl-D-glutamyl-meso-2,6-diaminopimeloyl-D-alanyl-D-alanine + UDP-N-acetyl-alpha-D-glucosamine = di-trans,octa-cis-undecaprenyl diphospho-[N-acetyl-alpha-D-glucosaminyl-(1-&gt;4)]-N-acetyl-alpha-D-muramoyl-L-alanyl-D-glutamyl-meso-2,6-diaminopimeloyl-D-alanyl-D-alanine + UDP + H(+). Its pathway is cell wall biogenesis; peptidoglycan biosynthesis. Functionally, cell wall formation. Catalyzes the transfer of a GlcNAc subunit on undecaprenyl-pyrophosphoryl-MurNAc-pentapeptide (lipid intermediate I) to form undecaprenyl-pyrophosphoryl-MurNAc-(pentapeptide)GlcNAc (lipid intermediate II). The sequence is that of UDP-N-acetylglucosamine--N-acetylmuramyl-(pentapeptide) pyrophosphoryl-undecaprenol N-acetylglucosamine transferase from Rubrobacter xylanophilus (strain DSM 9941 / JCM 11954 / NBRC 16129 / PRD-1).